The chain runs to 418 residues: Galactooligosaccharides transport system permease protein GanP (418 aa).

9 consecutive transmembrane segments (helical) span residues 25–45 (IKGI…GDLL), 65–85 (VFLL…LAVY), 129–149 (LFIL…LAFT), 191–211 (VVWT…LAII), 226–246 (ILIL…AGLF), 279–299 (LILM…TGVL), 323–343 (YITL…QFTF), 357–379 (GGPA…IYKL), and 388–408 (LAAA…LWQF). The ABC transmembrane type-1 domain occupies 187 to 407 (LAWTVVWTLA…VFVISIALWQ (221 aa)).

This sequence belongs to the binding-protein-dependent transport system permease family. As to quaternary structure, the complex is composed of two ATP-binding proteins (MsmX), two transmembrane proteins (GanP and GanQ) and a solute-binding protein (GanS).

Its subcellular location is the cell membrane. Functionally, involved in galactan degradation. Part of the ABC transporter complex GanPQS involved in the uptake of galactooligosaccharides. Responsible for the translocation of the substrate across the membrane. This Bacillus subtilis (strain 168) protein is Galactooligosaccharides transport system permease protein GanP (ganP).